A 323-amino-acid chain; its full sequence is Elongation factor P--(R)-beta-lysine ligase (323 aa).

76–78 lines the substrate pocket; sequence SPE. Residues 100–102 and asparagine 109 each bind ATP; that span reads RNE. A substrate-binding site is contributed by tyrosine 118. Residue 242 to 243 coordinates ATP; the sequence is EL. Glutamate 249 is a binding site for substrate. Glycine 298 serves as a coordination point for ATP.

It belongs to the class-II aminoacyl-tRNA synthetase family. EpmA subfamily. In terms of assembly, homodimer.

It carries out the reaction D-beta-lysine + L-lysyl-[protein] + ATP = N(6)-((3R)-3,6-diaminohexanoyl)-L-lysyl-[protein] + AMP + diphosphate + H(+). Its function is as follows. With EpmB is involved in the beta-lysylation step of the post-translational modification of translation elongation factor P (EF-P). Catalyzes the ATP-dependent activation of (R)-beta-lysine produced by EpmB, forming a lysyl-adenylate, from which the beta-lysyl moiety is then transferred to the epsilon-amino group of a conserved specific lysine residue in EF-P. The polypeptide is Elongation factor P--(R)-beta-lysine ligase (Pasteurella multocida (strain Pm70)).